Here is a 112-residue protein sequence, read N- to C-terminus: Large ribosomal subunit protein bL20c (112 aa).

This sequence belongs to the bacterial ribosomal protein bL20 family.

It localises to the plastid. It is found in the chloroplast. Its function is as follows. Binds directly to 23S ribosomal RNA and is necessary for the in vitro assembly process of the 50S ribosomal subunit. It is not involved in the protein synthesizing functions of that subunit. The sequence is that of Large ribosomal subunit protein bL20c (rpl20) from Anthoceros angustus (Hornwort).